The chain runs to 238 residues: MNSNASNTPIAIGISQIFPCSYLDGQQEQLLVIQEETLDPILFDRLLAIGFRRSGSAIYKPRCPRCSACQPIRLPIKEFTPSKRQKRTLAHNRDLTWRITSEHTEAQYALYEKYIRERHFDGPMFPPSKTQYEQFLFCHWLPPTFIEVYDGNRLLAVAVTDTLSNSLSAIYSYFDPDEERRSLGSLLILLQCRLAKLQDKEFLYLGYQIDANRKMSYKRLYRPYQILTPQGWEYSQVC.

Belongs to the R-transferase family. Bpt subfamily.

Its subcellular location is the cytoplasm. The enzyme catalyses N-terminal L-glutamyl-[protein] + L-leucyl-tRNA(Leu) = N-terminal L-leucyl-L-glutamyl-[protein] + tRNA(Leu) + H(+). It catalyses the reaction N-terminal L-aspartyl-[protein] + L-leucyl-tRNA(Leu) = N-terminal L-leucyl-L-aspartyl-[protein] + tRNA(Leu) + H(+). Functions in the N-end rule pathway of protein degradation where it conjugates Leu from its aminoacyl-tRNA to the N-termini of proteins containing an N-terminal aspartate or glutamate. The polypeptide is Aspartate/glutamate leucyltransferase (Shewanella sp. (strain MR-7)).